A 309-amino-acid chain; its full sequence is Pyridoxal 5'-phosphate synthase subunit PDX1.1 (309 aa).

At M1 the chain carries N-acetylmethionine. Position 41 (D41) interacts with D-ribose 5-phosphate. Residue K98 is the Schiff-base intermediate with D-ribose 5-phosphate of the active site. G170 contacts D-ribose 5-phosphate. R182 contributes to the D-glyceraldehyde 3-phosphate binding site. D-ribose 5-phosphate-binding positions include G231 and 252 to 253 (GS).

The protein belongs to the PdxS/SNZ family. As to quaternary structure, homodimer or heterodimer with PDX1.2 or PDX1.3. Interacts with PDX2. As to expression, expressed in flowers, shoots, leaves and weakly in roots.

It localises to the cytoplasm. It carries out the reaction aldehydo-D-ribose 5-phosphate + D-glyceraldehyde 3-phosphate + L-glutamine = pyridoxal 5'-phosphate + L-glutamate + phosphate + 3 H2O + H(+). It participates in cofactor biosynthesis; pyridoxal 5'-phosphate biosynthesis. Functionally, catalyzes the formation of pyridoxal 5'-phosphate from ribose 5-phosphate (RBP), glyceraldehyde 3-phosphate (G3P) and ammonia. The ammonia is provided by PDX2. Can also use ribulose 5-phosphate and dihydroxyacetone phosphate as substrates, resulting from enzyme-catalyzed isomerization of RBP and G3P, respectively. Also plays an indirect role in resistance to singlet oxygen-generating photosensitizers. This Arabidopsis thaliana (Mouse-ear cress) protein is Pyridoxal 5'-phosphate synthase subunit PDX1.1 (PDX11).